A 379-amino-acid chain; its full sequence is GDP-mannose transporter 1 (379 aa).

At 1 to 39 (MTDNRKPEDYTIEMDKLGQNKNYQAPPPPPQPRSSTASS) the chain is on the cytoplasmic side. The interval 17-38 (LGQNKNYQAPPPPPQPRSSTAS) is disordered. A helical transmembrane segment spans residues 40–60 (ISNNAALSVLAYCGSSILMTV). Residues 61 to 69 (MNKYVLSSD) are Lumenal-facing. The chain crosses the membrane as a helical span at residues 70 to 90 (FNLNFFLLCVQSLVCIIAIQL). The Cytoplasmic portion of the chain corresponds to 91–110 (CKACGLITYRDFNLDEARKW). The helical transmembrane segment at 111–133 (FPITLLLIGMIYTGSKALQFLSI) threads the bilayer. The Lumenal portion of the chain corresponds to 134–136 (PVY). Residues 137–156 (TIFKNLTIILIAYGEVLWFG) traverse the membrane as a helical segment. Over 157-162 (GSVTNL) the chain is Cytoplasmic. A helical membrane pass occupies residues 163 to 182 (TLFSFGLMVFSSIIAAWADI). Residues 183 to 198 (KHAIESSGDATSKVST) are Lumenal-facing. A helical transmembrane segment spans residues 199–219 (LNAGYIWMLINCLCTSSYVLG). Over 220–233 (MRKRIKLTNFKDFD) the chain is Cytoplasmic. The helical transmembrane segment at 234-254 (TMFYNNLLSIPVLIVCSGILE) threads the bilayer. Topologically, residues 255–272 (DWSPANVARNFPSADRNG) are lumenal. The helical transmembrane segment at 273 to 293 (IMFAMILSGLSTVFISYTSAW) threads the bilayer. At 294 to 301 (CVRVTSST) the chain is on the cytoplasmic side. Residues 302-322 (TYSMVGALNKLPIALSGLIFF) traverse the membrane as a helical segment. The Lumenal segment spans residues 323 to 325 (DAP). The chain crosses the membrane as a helical span at residues 326–346 (VTFPSVSAIMVGFVSGIVYAV). At 347 to 379 (AKIKQNAKPKVGILPTTNPVSASSQSMRDSLRS) the chain is on the cytoplasmic side.

This sequence belongs to the TPT transporter family. SLC35D subfamily. In terms of assembly, homooligomer.

The protein resides in the golgi apparatus membrane. It localises to the cytoplasmic vesicle membrane. The protein localises to the endoplasmic reticulum membrane. Functionally, involved in the import of GDP-mannose from the cytoplasm into the Golgi lumen. The chain is GDP-mannose transporter 1 (gmt1) from Emericella nidulans (strain FGSC A4 / ATCC 38163 / CBS 112.46 / NRRL 194 / M139) (Aspergillus nidulans).